Here is a 121-residue protein sequence, read N- to C-terminus: MVYAIVETGGKQVLVQPGRFYDVELLALDVEAALTFDKVLLVRHEGGAVVGRPTVEGAAVQGRILQHGKAAKVTVYKMRPKKGYRRKKGHRQRFTRVMIESIDFEGRSFTAEAKAEAVSST.

It belongs to the bacterial ribosomal protein bL21 family. As to quaternary structure, part of the 50S ribosomal subunit. Contacts protein L20.

In terms of biological role, this protein binds to 23S rRNA in the presence of protein L20. This is Large ribosomal subunit protein bL21 from Gloeobacter violaceus (strain ATCC 29082 / PCC 7421).